The following is a 181-amino-acid chain: Large ribosomal subunit protein uL5 (181 aa).

It belongs to the universal ribosomal protein uL5 family. Part of the 50S ribosomal subunit; part of the 5S rRNA/L5/L18/L25 subcomplex. Contacts the 5S rRNA and the P site tRNA. Forms a bridge to the 30S subunit in the 70S ribosome.

This is one of the proteins that bind and probably mediate the attachment of the 5S RNA into the large ribosomal subunit, where it forms part of the central protuberance. In the 70S ribosome it contacts protein S13 of the 30S subunit (bridge B1b), connecting the 2 subunits; this bridge is implicated in subunit movement. Contacts the P site tRNA; the 5S rRNA and some of its associated proteins might help stabilize positioning of ribosome-bound tRNAs. The sequence is that of Large ribosomal subunit protein uL5 from Acaryochloris marina (strain MBIC 11017).